A 306-amino-acid chain; its full sequence is Flavin adenine dinucleotide synthase (306 aa).

FAD-binding positions include Ser-59, Ile-107, Gly-164, 182-185 (DSNW), Arg-190, and Arg-300.

This sequence belongs to the PAPS reductase family. FAD1 subfamily.

It localises to the cytoplasm. It carries out the reaction FMN + ATP + H(+) = FAD + diphosphate. The protein operates within cofactor biosynthesis; FAD biosynthesis; FAD from FMN: step 1/1. In terms of biological role, catalyzes the adenylation of flavin mononucleotide (FMN) to form flavin adenine dinucleotide (FAD) coenzyme. This Saccharomyces cerevisiae (strain ATCC 204508 / S288c) (Baker's yeast) protein is Flavin adenine dinucleotide synthase.